A 189-amino-acid polypeptide reads, in one-letter code: Parkinson disease protein 7 (189 aa).

Position 2 is an N-acetylalanine (Ala2). S-palmitoyl cysteine attachment occurs at residues Cys46 and Cys53. Tyr67 is subject to Phosphotyrosine. The active-site Nucleophile is the Cys106. The residue at position 106 (Cys106) is a Cysteine sulfinic acid (-SO2H); alternate. Cys106 carries S-palmitoyl cysteine; alternate lipidation. The active site involves His126. Lys130 is covalently cross-linked (Glycyl lysine isopeptide (Lys-Gly) (interchain with G-Cter in SUMO)). The residue at position 148 (Lys148) is an N6-acetyllysine. Lys182 is modified (N6-succinyllysine).

Belongs to the peptidase C56 family. As to quaternary structure, homodimer. Binds EFCAB6/DJBP and PIAS2. Part of a ternary complex containing PARK7, EFCAB6/DJBP and AR. Interacts (via N-terminus) with OTUD7B. Interacts with BBS1, HIPK1, CLCF1 and MTERF. Forms a complex with PINK1 and PRKN. Interacts (via C-terminus) with NCF1; the interaction is enhanced by LPS and modulates NCF1 phosphorylation and membrane translocation. Interacts with NENF. Deglycase activity does not require glutathione as a cofactor, however, glycated glutathione constitutes a PARK7 substrate. is required as a cofactor. Post-translationally, sumoylated on Lys-130 by PIAS2 or PIAS4; which is enhanced after ultraviolet irradiation and essential for cell-growth promoting activity and transforming activity. In terms of processing, cys-106 is easily oxidized to sulfinic acid. Undergoes cleavage of a C-terminal peptide and subsequent activation of protease activity in response to oxidative stress. In terms of tissue distribution, highly expressed in pancreas, kidney, skeletal muscle, liver, testis and heart. Detected at slightly lower levels in placenta and brain (at protein level). Detected in astrocytes, Sertoli cells, spermatogonia, spermatids and spermatozoa. Expressed by pancreatic islets at higher levels than surrounding exocrine tissues.

Its subcellular location is the cell membrane. It is found in the cytoplasm. The protein resides in the nucleus. The protein localises to the membrane raft. It localises to the mitochondrion. Its subcellular location is the endoplasmic reticulum. It catalyses the reaction N(omega)-(1-hydroxy-2-oxopropyl)-L-arginyl-[protein] + H2O = lactate + L-arginyl-[protein] + H(+). The catalysed reaction is N(6)-(1-hydroxy-2-oxopropyl)-L-lysyl-[protein] + H2O = lactate + L-lysyl-[protein] + H(+). The enzyme catalyses S-(1-hydroxy-2-oxopropyl)-L-cysteinyl-[protein] + H2O = lactate + L-cysteinyl-[protein] + H(+). It carries out the reaction N(omega)-(1-hydroxy-2-oxoethyl)-L-arginyl-[protein] + H2O = L-arginyl-[protein] + glycolate + H(+). It catalyses the reaction N(6)-(1-hydroxy-2-oxoethyl)-L-lysyl-[protein] + H2O = glycolate + L-lysyl-[protein] + H(+). The catalysed reaction is S-(1-hydroxy-2-oxoethyl)-L-cysteinyl-[protein] + H2O = glycolate + L-cysteinyl-[protein] + H(+). The enzyme catalyses N(2)-(1-hydroxy-2-oxopropyl)-dGTP + H2O = lactate + dGTP + H(+). It carries out the reaction N(2)-(1-hydroxy-2-oxopropyl)-GTP + H2O = lactate + GTP + H(+). It catalyses the reaction N(2)-(1-hydroxy-2-oxopropyl)-GDP + H2O = lactate + GDP + H(+). The catalysed reaction is N(2)-(1-hydroxy-2-oxopropyl)-GMP + H2O = lactate + GMP + H(+). The enzyme catalyses N(2)-(1-hydroxy-2-oxoethyl)-dGTP + H2O = dGTP + glycolate + H(+). It carries out the reaction N(2)-(1-hydroxy-2-oxoethyl)-GTP + H2O = glycolate + GTP + H(+). It catalyses the reaction N(2)-(1-hydroxy-2-oxoethyl)-GDP + H2O = glycolate + GDP + H(+). The catalysed reaction is N(2)-(1-hydroxy-2-oxoethyl)-GMP + H2O = glycolate + GMP + H(+). The enzyme catalyses an N(2)-(1-hydroxy-2-oxopropyl)-guanosine in RNA + H2O = a guanosine in RNA + lactate + H(+). It carries out the reaction an N(2)-(1-hydroxy-2-oxopropyl)-2'-deoxyguanosine in DNA + H2O = a 2'-deoxyguanosine in DNA + lactate + H(+). It catalyses the reaction an N(2)-(1-hydroxy-2-oxoethyl)-guanosine in RNA + H2O = a guanosine in RNA + glycolate + H(+). The catalysed reaction is an N(2)-(1-hydroxy-2-oxoethyl)-2'-deoxyguanosine in DNA + H2O = a 2'-deoxyguanosine in DNA + glycolate + H(+). Functionally, multifunctional protein with controversial molecular function which plays an important role in cell protection against oxidative stress and cell death acting as oxidative stress sensor and redox-sensitive chaperone and protease. It is involved in neuroprotective mechanisms like the stabilization of NFE2L2 and PINK1 proteins, male fertility as a positive regulator of androgen signaling pathway as well as cell growth and transformation through, for instance, the modulation of NF-kappa-B signaling pathway. Has been described as a protein and nucleotide deglycase that catalyzes the deglycation of the Maillard adducts formed between amino groups of proteins or nucleotides and reactive carbonyl groups of glyoxals. But this function is rebuted by other works. As a protein deglycase, repairs methylglyoxal- and glyoxal-glycated proteins, and releases repaired proteins and lactate or glycolate, respectively. Deglycates cysteine, arginine and lysine residues in proteins, and thus reactivates these proteins by reversing glycation by glyoxals. Acts on early glycation intermediates (hemithioacetals and aminocarbinols), preventing the formation of advanced glycation endproducts (AGE) that cause irreversible damage. Also functions as a nucleotide deglycase able to repair glycated guanine in the free nucleotide pool (GTP, GDP, GMP, dGTP) and in DNA and RNA. Is thus involved in a major nucleotide repair system named guanine glycation repair (GG repair), dedicated to reversing methylglyoxal and glyoxal damage via nucleotide sanitization and direct nucleic acid repair. Protects histones from adduction by methylglyoxal, controls the levels of methylglyoxal-derived argininine modifications on chromatin. Able to remove the glycations and restore histone 3, histone glycation disrupts both local and global chromatin architecture by altering histone-DNA interactions as well as histone acetylation and ubiquitination levels. Displays a very low glyoxalase activity that may reflect its deglycase activity. Eliminates hydrogen peroxide and protects cells against hydrogen peroxide-induced cell death. Required for correct mitochondrial morphology and function as well as for autophagy of dysfunctional mitochondria. Plays a role in regulating expression or stability of the mitochondrial uncoupling proteins SLC25A14 and SLC25A27 in dopaminergic neurons of the substantia nigra pars compacta and attenuates the oxidative stress induced by calcium entry into the neurons via L-type channels during pacemaking. Regulates astrocyte inflammatory responses, may modulate lipid rafts-dependent endocytosis in astrocytes and neuronal cells. In pancreatic islets, involved in the maintenance of mitochondrial reactive oxygen species (ROS) levels and glucose homeostasis in an age- and diet dependent manner. Protects pancreatic beta cells from cell death induced by inflammatory and cytotoxic setting. Binds to a number of mRNAs containing multiple copies of GG or CC motifs and partially inhibits their translation but dissociates following oxidative stress. Metal-binding protein able to bind copper as well as toxic mercury ions, enhances the cell protection mechanism against induced metal toxicity. In macrophages, interacts with the NADPH oxidase subunit NCF1 to direct NADPH oxidase-dependent ROS production, and protects against sepsis. This is Parkinson disease protein 7 from Homo sapiens (Human).